The primary structure comprises 229 residues: Guanylate kinase (229 aa).

The RPE1 insert domain occupies 7-42 (RVLQKCAYREEFKGDMERSTAATSKLPLEVELSRNS). The Guanylate kinase-like domain occupies 44 to 222 (GLIIILSSPS…TLKKIHAIIV (179 aa)). 51-58 (SPSGTGKS) provides a ligand contact to ATP.

This sequence belongs to the guanylate kinase family.

It is found in the cytoplasm. The enzyme catalyses GMP + ATP = GDP + ADP. Essential for recycling GMP and indirectly, cGMP. In Rickettsia conorii (strain ATCC VR-613 / Malish 7), this protein is Guanylate kinase (gmk).